The following is a 760-amino-acid chain: Acetyl-CoA decarbonylase/synthase complex subunit alpha 1 (760 aa).

[4Fe-4S] cluster is bound by residues Cys56, Cys59, Cys60, Cys62, Cys67, and Cys77. His100 is a binding site for CO. [Ni-4Fe-4S] cluster is bound by residues His231, Cys259, and Cys298. 2 consecutive 4Fe-4S ferredoxin-type domains span residues 381-410 and 418-450; these read KKLQKEAKRCLGCGDCERVCPNDLPIVEAM and FEGLADLFDRCVGCARCESECPTKLRVMNMIED. Cys390, Cys393, Cys396, Cys400, Cys428, Cys431, Cys434, and Cys438 together coordinate [4Fe-4S] cluster. 3 residues coordinate [Ni-4Fe-4S] cluster: Cys496, Cys525, and Cys560.

This sequence belongs to the Ni-containing carbon monoxide dehydrogenase family. As to quaternary structure, heterotetramer of two alpha and two epsilon subunits. The ACDS complex is made up of alpha, epsilon, beta, gamma and delta subunits with a probable stoichiometry of (alpha(2)epsilon(2))(4)-beta(8)-(gamma(1)delta(1))(8). [4Fe-4S] cluster serves as cofactor. Requires [Ni-4Fe-4S] cluster as cofactor.

It carries out the reaction CO + 2 oxidized [2Fe-2S]-[ferredoxin] + H2O = 2 reduced [2Fe-2S]-[ferredoxin] + CO2 + 2 H(+). Its function is as follows. Part of the ACDS complex that catalyzes the reversible cleavage of acetyl-CoA, allowing autotrophic growth from CO(2). The alpha-epsilon subcomponent functions as a carbon monoxide dehydrogenase. The chain is Acetyl-CoA decarbonylase/synthase complex subunit alpha 1 from Methanopyrus kandleri (strain AV19 / DSM 6324 / JCM 9639 / NBRC 100938).